The following is a 337-amino-acid chain: Protein-methionine-sulfoxide reductase catalytic subunit MsrP (337 aa).

Positions Met1–Ala48 form a signal peptide, tat-type signal. Mo-molybdopterin is bound by residues Asn94, Tyr97–Glu98, Cys152, Thr187, Asn237, Arg242, and Ser253–Lys255.

It belongs to the MsrP family. Heterodimer of a catalytic subunit (MsrP) and a heme-binding subunit (MsrQ). Mo-molybdopterin serves as cofactor. In terms of processing, predicted to be exported by the Tat system. The position of the signal peptide cleavage has not been experimentally proven.

Its subcellular location is the periplasm. It catalyses the reaction L-methionyl-[protein] + a quinone + H2O = L-methionyl-(S)-S-oxide-[protein] + a quinol. It carries out the reaction L-methionyl-[protein] + a quinone + H2O = L-methionyl-(R)-S-oxide-[protein] + a quinol. Functionally, part of the MsrPQ system that repairs oxidized periplasmic proteins containing methionine sulfoxide residues (Met-O), using respiratory chain electrons. Thus protects these proteins from oxidative-stress damage caused by reactive species of oxygen and chlorine generated by the host defense mechanisms. MsrPQ is essential for the maintenance of envelope integrity under bleach stress, rescuing a wide series of structurally unrelated periplasmic proteins from methionine oxidation. The catalytic subunit MsrP is non-stereospecific, being able to reduce both (R-) and (S-) diastereoisomers of methionine sulfoxide. This is Protein-methionine-sulfoxide reductase catalytic subunit MsrP from Pseudomonas aeruginosa (strain ATCC 15692 / DSM 22644 / CIP 104116 / JCM 14847 / LMG 12228 / 1C / PRS 101 / PAO1).